The primary structure comprises 279 residues: Large ribosomal subunit protein uL2 (279 aa).

Disordered regions lie at residues 1–28 (MPAR…TKEK) and 221–279 (RGTV…GRRR). Residues 12-22 (GRRNSSVLTRD) are compositionally biased toward polar residues.

This sequence belongs to the universal ribosomal protein uL2 family. As to quaternary structure, part of the 50S ribosomal subunit. Forms a bridge to the 30S subunit in the 70S ribosome.

One of the primary rRNA binding proteins. Required for association of the 30S and 50S subunits to form the 70S ribosome, for tRNA binding and peptide bond formation. It has been suggested to have peptidyltransferase activity; this is somewhat controversial. Makes several contacts with the 16S rRNA in the 70S ribosome. The sequence is that of Large ribosomal subunit protein uL2 from Rubrobacter xylanophilus (strain DSM 9941 / JCM 11954 / NBRC 16129 / PRD-1).